We begin with the raw amino-acid sequence, 144 residues long: ATP synthase subunit 9, mitochondrial (144 aa).

The transit peptide at 1–63 (MASTRVLASR…ATRQITQKRA (63 aa)) directs the protein to the mitochondrion. 2 helical membrane passes run 83–103 (TAAIGLTGAGIGIGLVFAALL) and 120–140 (AILGFAFVEAIGLFDLMVALM).

It belongs to the ATPase C chain family. As to quaternary structure, F-type ATPases have 2 components, CF(1) - the catalytic core - and CF(0) - the membrane proton channel. CF(1) has five subunits: alpha(3), beta(3), gamma(1), delta(1), epsilon(1). CF(0) has three main subunits: a, b and c.

The protein resides in the mitochondrion membrane. In terms of biological role, mitochondrial membrane ATP synthase (F(1)F(0) ATP synthase or Complex V) produces ATP from ADP in the presence of a proton gradient across the membrane which is generated by electron transport complexes of the respiratory chain. F-type ATPases consist of two structural domains, F(1) - containing the extramembraneous catalytic core and F(0) - containing the membrane proton channel, linked together by a central stalk and a peripheral stalk. During catalysis, ATP synthesis in the catalytic domain of F(1) is coupled via a rotary mechanism of the central stalk subunits to proton translocation. Part of the complex F(0) domain. A homomeric c-ring of probably 10 subunits is part of the complex rotary element. The protein is ATP synthase subunit 9, mitochondrial (ATP9) of Podospora anserina (Pleurage anserina).